The primary structure comprises 506 residues: Maturase K (506 aa).

The protein belongs to the intron maturase 2 family. MatK subfamily.

It is found in the plastid. It localises to the chloroplast. Usually encoded in the trnK tRNA gene intron. Probably assists in splicing its own and other chloroplast group II introns. This is Maturase K from Calluna vulgaris (Heather).